The following is a 387-amino-acid chain: 2-deoxystreptamine glucosyltransferase (387 aa).

Belongs to the glycosyltransferase group 1 family.

It carries out the reaction 2-deoxystreptamine + UDP-N-acetyl-alpha-D-glucosamine = 2'-N-acetylparomamine + UDP + H(+). The enzyme catalyses 2-deoxystreptamine + UDP-alpha-D-glucose = 2'-deamino-2'-hydroxyparomamine + UDP + H(+). It functions in the pathway antibiotic biosynthesis; kanamycin biosynthesis. Glycosyltransferase involved in the biosynthesis of kanamycin by mediating conversion of 2-deoxystreptamine (2-DOS) to 2'-N-acetylparomamine using UDP-alpha-D-glucose as sugar donor. Can also accept UDP-alpha-D-glucosamine, but with a much lower activity compared to UDP-alpha-D-glucose. This is 2-deoxystreptamine glucosyltransferase (kanF) from Streptomyces kanamyceticus.